Consider the following 371-residue polypeptide: Zygote-specific protein 3 (371 aa).

The signal sequence occupies residues 1–24 (MLRSAGRVAAVALLALFALGCVSA). An N-linked (GlcNAc...) asparagine glycan is attached at asparagine 41. 2 ANK repeats span residues 62–91 (TRRL…LARV) and 94–123 (GTTT…DPNA). WW domains follow at residues 159-187 (EPGA…WAVP) and 283-313 (YATP…WELP).

It is found in the endoplasmic reticulum lumen. Functionally, may have a role in the remodeling of the endoplasmic reticulum upon zygote formation. This Chlamydomonas reinhardtii (Chlamydomonas smithii) protein is Zygote-specific protein 3 (ZYS3).